The chain runs to 492 residues: uncharacterized protein (492 aa).

Helical transmembrane passes span 67–87 (VAIM…GGWL), 88–108 (ADRV…IMFG), 110–130 (IALA…LIIV), 157–177 (GFSI…LIVG), 185–205 (YHLG…VFAL), 232–252 (IGVI…VLTI), 255–275 (FIDL…IIMF), 294–314 (LFIG…ILAV), 333–353 (WFQS…AWLW), 367–387 (FSIG…PAMQ), 392–412 (LVSP…ELCL), 434–454 (SMWF…AGLF), and 464–484 (GTIG…SPVI).

This sequence belongs to the major facilitator superfamily. Proton-dependent oligopeptide transporter (POT/PTR) (TC 2.A.17) family.

It localises to the cell membrane. This is an uncharacterized protein from Bacillus subtilis (strain 168).